Here is a 246-residue protein sequence, read N- to C-terminus: UDP-2,3-diacylglucosamine hydrolase (246 aa).

D8, H10, D41, N79, and H114 together coordinate Mn(2+). Substrate is bound at residue 79 to 80; the sequence is NR. Residues D122, S160, K164, K167, and H195 each coordinate substrate. The Mn(2+) site is built by H195 and H197.

It belongs to the LpxH family. Mn(2+) is required as a cofactor.

Its subcellular location is the cell inner membrane. It catalyses the reaction UDP-2-N,3-O-bis[(3R)-3-hydroxytetradecanoyl]-alpha-D-glucosamine + H2O = 2-N,3-O-bis[(3R)-3-hydroxytetradecanoyl]-alpha-D-glucosaminyl 1-phosphate + UMP + 2 H(+). Its pathway is glycolipid biosynthesis; lipid IV(A) biosynthesis; lipid IV(A) from (3R)-3-hydroxytetradecanoyl-[acyl-carrier-protein] and UDP-N-acetyl-alpha-D-glucosamine: step 4/6. Its function is as follows. Hydrolyzes the pyrophosphate bond of UDP-2,3-diacylglucosamine to yield 2,3-diacylglucosamine 1-phosphate (lipid X) and UMP by catalyzing the attack of water at the alpha-P atom. Involved in the biosynthesis of lipid A, a phosphorylated glycolipid that anchors the lipopolysaccharide to the outer membrane of the cell. This is UDP-2,3-diacylglucosamine hydrolase from Tolumonas auensis (strain DSM 9187 / NBRC 110442 / TA 4).